Reading from the N-terminus, the 380-residue chain is Chaperone protein DnaJ (380 aa).

A J domain is found at 5–70 (DFYETLGVSK…QKRAAYDRFG (66 aa)). The CR-type zinc-finger motif lies at 141-219 (GKTAQIRVPT…CHGQGRVTEE (79 aa)). Zn(2+)-binding residues include Cys154, Cys157, Cys171, Cys174, Cys193, Cys196, Cys207, and Cys210. CXXCXGXG motif repeat units lie at residues 154 to 161 (CEVCSGSG), 171 to 178 (CATCQGSG), 193 to 200 (CPTCQGRG), and 207 to 214 (CGKCHGQG).

This sequence belongs to the DnaJ family. As to quaternary structure, homodimer. Requires Zn(2+) as cofactor.

It is found in the cytoplasm. Its function is as follows. Participates actively in the response to hyperosmotic and heat shock by preventing the aggregation of stress-denatured proteins and by disaggregating proteins, also in an autonomous, DnaK-independent fashion. Unfolded proteins bind initially to DnaJ; upon interaction with the DnaJ-bound protein, DnaK hydrolyzes its bound ATP, resulting in the formation of a stable complex. GrpE releases ADP from DnaK; ATP binding to DnaK triggers the release of the substrate protein, thus completing the reaction cycle. Several rounds of ATP-dependent interactions between DnaJ, DnaK and GrpE are required for fully efficient folding. Also involved, together with DnaK and GrpE, in the DNA replication of plasmids through activation of initiation proteins. The sequence is that of Chaperone protein DnaJ from Allorhizobium ampelinum (strain ATCC BAA-846 / DSM 112012 / S4) (Agrobacterium vitis (strain S4)).